The following is a 604-amino-acid chain: Serine/threonine-protein kinase A-Raf (604 aa).

The region spanning 19 to 91 (GTVKVYLPNK…DGEELIVEVL (73 aa)) is the RBD domain. Residues 98-144 (MHNFVRKTFFSLAFCDFCLKFLFHGFRCQTCGYKFHQHCSSKVPTVC) form a Phorbol-ester/DAG-type zinc finger. Residues H99, C112, C115, C125, C128, H133, C136, and C144 each contribute to the Zn(2+) site. Phosphoserine is present on residues S157 and S162. Disordered stretches follow at residues 178-222 (ELLT…HMVS) and 241-287 (TDAA…DEKK). At T181 the chain carries Phosphothreonine. S186 carries the post-translational modification Phosphoserine. The span at 210-222 (IRSTSTPNVHMVS) shows a compositional bias: polar residues. Residues 252–265 (PRGSPSPASVSSGR) show a composition bias toward low complexity. 2 positions are modified to phosphoserine: S255 and S267. Residues 272–287 (LPAEQRERKSLADEKK) show a composition bias toward basic and acidic residues. The Protein kinase domain occupies 308–568 (VQLLKRIGTG…PQILATIELL (261 aa)). ATP contacts are provided by residues 314–322 (IGTGSFGTV) and K334. T316 bears the Phosphothreonine mark. Residue D427 is the Proton acceptor of the active site.

This sequence belongs to the protein kinase superfamily. TKL Ser/Thr protein kinase family. RAF subfamily. In terms of assembly, interacts with TH1L/NELFD. Requires Zn(2+) as cofactor. Post-translationally, dephosphorylation by the SHOC2-MRAS-PP1c (SMP) complex consisting of SHOC2, GTP-bound M-Ras/MRAS and the catalytic subunit of protein phosphatase 1 (PPP1CA, PPP1CB or PPP1CC); this relieves inactivation and stimulates kinase activity.

The enzyme catalyses L-seryl-[protein] + ATP = O-phospho-L-seryl-[protein] + ADP + H(+). It catalyses the reaction L-threonyl-[protein] + ATP = O-phospho-L-threonyl-[protein] + ADP + H(+). In terms of biological role, involved in the transduction of mitogenic signals from the cell membrane to the nucleus. May also regulate the TOR signaling cascade. Phosphorylates PFKFB2. This chain is Serine/threonine-protein kinase A-Raf (Araf), found in Rattus norvegicus (Rat).